Consider the following 212-residue polypeptide: N-(5'-phosphoribosyl)anthranilate isomerase (212 aa).

It belongs to the TrpF family.

The catalysed reaction is N-(5-phospho-beta-D-ribosyl)anthranilate = 1-(2-carboxyphenylamino)-1-deoxy-D-ribulose 5-phosphate. It participates in amino-acid biosynthesis; L-tryptophan biosynthesis; L-tryptophan from chorismate: step 3/5. In Roseiflexus castenholzii (strain DSM 13941 / HLO8), this protein is N-(5'-phosphoribosyl)anthranilate isomerase.